The primary structure comprises 511 residues: V-type proton ATPase subunit B (511 aa).

R381 provides a ligand contact to ATP. Residues 484–511 form a disordered region; sequence FYGRDREQDDDEEEEEDPDKSGDKLIDA. A compositionally biased stretch (acidic residues) spans 491–501; that stretch reads QDDDEEEEEDP. The span at 502 to 511 shows a compositional bias: basic and acidic residues; the sequence is DKSGDKLIDA.

This sequence belongs to the ATPase alpha/beta chains family. In terms of assembly, V-ATPase is a heteromultimeric enzyme composed of a peripheral catalytic V1 complex (components A to H) attached to an integral membrane V0 proton pore complex (components: a, c, c', c'', d, e, f and VOA1).

It is found in the vacuole membrane. Non-catalytic subunit of the V1 complex of vacuolar(H+)-ATPase (V-ATPase), a multisubunit enzyme composed of a peripheral complex (V1) that hydrolyzes ATP and a membrane integral complex (V0) that translocates protons. V-ATPase is responsible for acidifying and maintaining the pH of intracellular compartments. This Candida tropicalis (Yeast) protein is V-type proton ATPase subunit B (VMA2).